A 99-amino-acid chain; its full sequence is Small ribosomal subunit protein uS19c (99 aa).

It belongs to the universal ribosomal protein uS19 family.

The protein localises to the plastid. The protein resides in the chloroplast. Protein S19 forms a complex with S13 that binds strongly to the 16S ribosomal RNA. The chain is Small ribosomal subunit protein uS19c from Oenothera biennis (German evening primrose).